The sequence spans 560 residues: Membrane protein insertase YidC (560 aa).

The chain crosses the membrane as a helical span at residues 7-27; sequence ILIVALAIVSYVMVLKWNQDY. The segment covering 38–56 has biased composition (polar residues); the sequence is ASSTTTSGLPDTATGNNAA. Positions 38–76 are disordered; the sequence is ASSTTTSGLPDTATGNNAAASDDIPRAASDTSAPAETPV. The next 4 membrane-spanning stretches (helical) occupy residues 367 to 387, 437 to 457, 468 to 488, and 515 to 535; these read IVGN…GIFF, LGGC…YWVL, FMLW…PIIM, and PIIF…YWVV.

Belongs to the OXA1/ALB3/YidC family. Type 1 subfamily. As to quaternary structure, interacts with the Sec translocase complex via SecD. Specifically interacts with transmembrane segments of nascent integral membrane proteins during membrane integration.

The protein resides in the cell inner membrane. Required for the insertion and/or proper folding and/or complex formation of integral membrane proteins into the membrane. Involved in integration of membrane proteins that insert both dependently and independently of the Sec translocase complex, as well as at least some lipoproteins. Aids folding of multispanning membrane proteins. The polypeptide is Membrane protein insertase YidC (Pseudomonas fluorescens (strain Pf0-1)).